A 106-amino-acid chain; its full sequence is Glycoprotein GP16 (106 aa).

In terms of processing, glycosylated.

Its subcellular location is the host cytoplasm. May be involved in formation or transport of the nucleocapsid-containing vesicles around the nuclear membrane. This is Glycoprotein GP16 (GP16) from Autographa californica nuclear polyhedrosis virus (AcMNPV).